Here is a 465-residue protein sequence, read N- to C-terminus: GTPase Der (465 aa).

2 EngA-type G domains span residues F3–Y166 and I184–S358. GTP is bound by residues G9–S16, D56–I60, N118–D121, G190–S197, D237–V241, and N302–D305. The KH-like domain occupies K359 to E443. Residues F446 to K465 form a disordered region.

The protein belongs to the TRAFAC class TrmE-Era-EngA-EngB-Septin-like GTPase superfamily. EngA (Der) GTPase family. As to quaternary structure, associates with the 50S ribosomal subunit.

Its function is as follows. GTPase that plays an essential role in the late steps of ribosome biogenesis. The polypeptide is GTPase Der (Francisella tularensis subsp. tularensis (strain FSC 198)).